Here is a 122-residue protein sequence, read N- to C-terminus: Large ribosomal subunit protein uL14c (122 aa).

The protein belongs to the universal ribosomal protein uL14 family. In terms of assembly, part of the 50S ribosomal subunit.

The protein localises to the plastid. The protein resides in the chloroplast. Binds to 23S rRNA. The protein is Large ribosomal subunit protein uL14c of Piper cenocladum (Ant piper).